A 197-amino-acid polypeptide reads, in one-letter code: Predicted GPI-anchored protein 34 (197 aa).

The first 20 residues, 1 to 20, serve as a signal peptide directing secretion; sequence MKFTSLICSSILLIIPTVMA. 3 N-linked (GlcNAc...) asparagine glycosylation sites follow: Asn110, Asn114, and Asn152. A lipid anchor (GPI-anchor amidated glycine) is attached at Gly169. Residues 170 to 197 constitute a propeptide, removed in mature form; the sequence is AAAMAGPVPILTNSIFTAGLLALAAVLL.

Its subcellular location is the cell membrane. In terms of biological role, predicted GPI-anchored protein which may have a role during host infection. This chain is Predicted GPI-anchored protein 34 (PGA34), found in Candida albicans (strain SC5314 / ATCC MYA-2876) (Yeast).